Consider the following 422-residue polypeptide: Beta-1,3-galactosyltransferase 2 (422 aa).

Over 1-20 (MLQWRRRHCCFAKMTWSPKR) the chain is Cytoplasmic. A helical; Signal-anchor for type II membrane protein transmembrane segment spans residues 21 to 43 (SLLRTPLTGVLSLVFLFAMFLFF). The Lumenal portion of the chain corresponds to 44–422 (NHHDWLPGRP…AGRYRHRKLH (379 aa)). Residues Asn75, Asn98, Asn119, Asn176, and Asn226 are each glycosylated (N-linked (GlcNAc...) asparagine). A disordered region spans residues 91 to 110 (LRPHTASNSSNTELSPQGVT). Over residues 95-110 (TASNSSNTELSPQGVT) the composition is skewed to polar residues.

It belongs to the glycosyltransferase 31 family. It depends on Mn(2+) as a cofactor. Detected in brain and heart.

It is found in the golgi apparatus membrane. It catalyses the reaction an N-acetyl-beta-D-glucosaminyl derivative + UDP-alpha-D-galactose = a beta-D-galactosyl-(1-&gt;3)-N-acetyl-beta-D-glucosaminyl derivative + UDP + H(+). It carries out the reaction a beta-D-GlcNAc-(1-&gt;3)-beta-D-Gal-(1-&gt;4)-beta-D-Glc-(1&lt;-&gt;1)-Cer(d18:1(4E)) + UDP-alpha-D-galactose = a beta-D-Gal-(1-&gt;3)-beta-D-GlcNAc-(1-&gt;3)-beta-D-Gal-(1-&gt;4)-beta-D-Glc-(1&lt;-&gt;1')-Cer(d18:1(4E)) + UDP + H(+). The enzyme catalyses a neolactoside IV(3)-beta-GlcNAc-nLc4Cer(d18:1(4E)) + UDP-alpha-D-galactose = a neolactoside IV(3)-beta-[Gal-beta-(1-&gt;3)-GlcNAc]-nLc4Cer(d18:1(4E)) + UDP + H(+). It functions in the pathway protein modification; protein glycosylation. Functionally, beta-1,3-galactosyltransferase that transfers galactose from UDP-galactose to substrates with a terminal beta-N-acetylglucosamine (beta-GlcNAc) residue. Can also utilize substrates with a terminal galactose residue, albeit with lower efficiency. Involved in the biosynthesis of the carbohydrate moieties of glycolipids and glycoproteins. The polypeptide is Beta-1,3-galactosyltransferase 2 (Mus musculus (Mouse)).